A 162-amino-acid polypeptide reads, in one-letter code: Phosphopantetheine adenylyltransferase (162 aa).

Ser11 lines the substrate pocket. Residues 11 to 12 (SF) and His19 contribute to the ATP site. Lys43, Val76, and Arg90 together coordinate substrate. ATP contacts are provided by residues 91-93 (GLR), Glu101, and 126-132 (HLYISSS).

It belongs to the bacterial CoaD family. As to quaternary structure, homohexamer. The cofactor is Mg(2+).

The protein localises to the cytoplasm. The catalysed reaction is (R)-4'-phosphopantetheine + ATP + H(+) = 3'-dephospho-CoA + diphosphate. The protein operates within cofactor biosynthesis; coenzyme A biosynthesis; CoA from (R)-pantothenate: step 4/5. In terms of biological role, reversibly transfers an adenylyl group from ATP to 4'-phosphopantetheine, yielding dephospho-CoA (dPCoA) and pyrophosphate. The polypeptide is Phosphopantetheine adenylyltransferase (Streptococcus pneumoniae (strain CGSP14)).